The chain runs to 472 residues: Membrane-bound acylglycerophosphatidylinositol O-acyltransferase MBOAT7 (472 aa).

The Cytoplasmic segment spans residues 1–5 (MSPEE). The helical transmembrane segment at 6-22 (WTYLVVLLISIPIGFLF) threads the bilayer. The Lumenal segment spans residues 23–33 (KKAGPGLKRWG). The chain crosses the membrane as a helical span at residues 34 to 57 (AAAVGLGLTLFTCGPHTLHSLVTI). Over 58–73 (LGTWALIQAQPCSCHA) the chain is Cytoplasmic. Residues 74–93 (LALAWTFSYLLFFRALSLLG) form a helical membrane-spanning segment. Residues 94–194 (LPTPTPFTNA…VPSLRPLLRR (101 aa)) are Lumenal-facing. The helical transmembrane segment at 195 to 212 (AWPAPLFGLLFLLSSHLF) threads the bilayer. Topologically, residues 213–231 (PLEAVREDAFYARPLPARL) are cytoplasmic. Residues 232–261 (FYMIPVFFAFRMRFYVAWIAAECGCIAAGF) traverse the membrane as a helical segment. At 262-426 (GAYPVAAKAR…LSLRDTLRYW (165 aa)) the chain is on the lumenal side. N-linked (GlcNAc...) asparagine glycosylation is present at N321. A helical membrane pass occupies residues 427–447 (ASVYFCVHVLALAALGLGLAL). The Cytoplasmic segment spans residues 448-472 (GRGGPGRRKSGAPAPSPASGKLREE). The disordered stretch occupies residues 450–472 (GGPGRRKSGAPAPSPASGKLREE).

This sequence belongs to the membrane-bound acyltransferase family. Interacts with SPTSSA; the interaction facilitates MBOAT7 location to mitochondria-associated membranes (MAMs).

Its subcellular location is the endoplasmic reticulum membrane. The enzyme catalyses a 1-acyl-sn-glycero-3-phospho-(1D-myo-inositol) + an acyl-CoA = a 1,2-diacyl-sn-glycero-3-phospho-(1D-myo-inositol) + CoA. It catalyses the reaction a 1-acyl-sn-glycero-3-phospho-(1D-myo-inositol) + (5Z,8Z,11Z,14Z)-eicosatetraenoyl-CoA = a 1-acyl-2-(5Z,8Z,11Z,14Z-eicosatetraenoyl)-sn-glycero-3-phospho-(1D-myo-inositol) + CoA. It carries out the reaction (5Z,8Z,11Z,14Z)-eicosatetraenoyl-CoA + 1-hexadecanoyl-sn-glycero-3-phosphocholine = 1-hexadecanoyl-2-(5Z,8Z,11Z,14Z-eicosatetraenoyl)-sn-glycero-3-phosphocholine + CoA. The catalysed reaction is 1-octadecanoyl-sn-glycero-3-phospho-(1D-myo-inositol) + (5Z,8Z,11Z,14Z)-eicosatetraenoyl-CoA = 1-octadecanoyl-2-(5Z,8Z,11Z,14Z-eicosatetraenoyl)-sn-glycero-3-phospho-(1D-myo-inositol) + CoA. It participates in lipid metabolism; phospholipid metabolism. Functionally, acyltransferase which catalyzes the transfer of an acyl group from an acyl-CoA to a lysophosphatidylinositol (1-acylglycerophosphatidylinositol or LPI) leading to the production of a phosphatidylinositol (1,2-diacyl-sn-glycero-3-phosphoinositol or PI) and participates in the reacylation step of the phospholipid remodeling pathway also known as the Lands cycle. Prefers arachidonoyl-CoA as the acyl donor, thus contributing to the regulation of free levels arachidonic acid in cell. In liver, participates in the regulation of triglyceride metabolism through the phosphatidylinositol acyl-chain remodeling regulation. This Bos taurus (Bovine) protein is Membrane-bound acylglycerophosphatidylinositol O-acyltransferase MBOAT7 (MBOAT7).